Reading from the N-terminus, the 184-residue chain is Shikimate kinase (184 aa).

12-17 (GSGKST) contacts ATP. A Mg(2+)-binding site is contributed by Ser16. 3 residues coordinate substrate: Asp34, Arg58, and Gly80. Arg117 serves as a coordination point for ATP. Arg136 is a substrate binding site. Arg153 contacts ATP. Residues 163-184 (MSRLDDPTPNTSPSSTASGAAT) are disordered. Over residues 169–184 (PTPNTSPSSTASGAAT) the composition is skewed to low complexity.

This sequence belongs to the shikimate kinase family. In terms of assembly, monomer. Mg(2+) serves as cofactor.

It localises to the cytoplasm. It catalyses the reaction shikimate + ATP = 3-phosphoshikimate + ADP + H(+). It functions in the pathway metabolic intermediate biosynthesis; chorismate biosynthesis; chorismate from D-erythrose 4-phosphate and phosphoenolpyruvate: step 5/7. Functionally, catalyzes the specific phosphorylation of the 3-hydroxyl group of shikimic acid using ATP as a cosubstrate. This Mycobacterium marinum (strain ATCC BAA-535 / M) protein is Shikimate kinase.